Consider the following 54-residue polypeptide: ATP synthase F(0) complex subunit 8 (54 aa).

Residues 9–29 form a helical membrane-spanning segment; that stretch reads WFMILFFSWVIFLTIIPTKII. Residues 35 to 54 are disordered; that stretch reads NDPTQVDAKEHKNDTWNWPW.

The protein belongs to the ATPase protein 8 family. Component of the ATP synthase complex composed at least of ATP5F1A/subunit alpha, ATP5F1B/subunit beta, ATP5MC1/subunit c (homooctomer), MT-ATP6/subunit a, MT-ATP8/subunit 8, ATP5ME/subunit e, ATP5MF/subunit f, ATP5MG/subunit g, ATP5MK/subunit k, ATP5MJ/subunit j, ATP5F1C/subunit gamma, ATP5F1D/subunit delta, ATP5F1E/subunit epsilon, ATP5PF/subunit F6, ATP5PB/subunit b, ATP5PD/subunit d, ATP5PO/subunit OSCP. ATP synthase complex consists of a soluble F(1) head domain (subunits alpha(3) and beta(3)) - the catalytic core - and a membrane F(0) domain - the membrane proton channel (subunits c, a, 8, e, f, g, k and j). These two domains are linked by a central stalk (subunits gamma, delta, and epsilon) rotating inside the F1 region and a stationary peripheral stalk (subunits F6, b, d, and OSCP).

Its subcellular location is the mitochondrion membrane. Its function is as follows. Subunit 8, of the mitochondrial membrane ATP synthase complex (F(1)F(0) ATP synthase or Complex V) that produces ATP from ADP in the presence of a proton gradient across the membrane which is generated by electron transport complexes of the respiratory chain. ATP synthase complex consist of a soluble F(1) head domain - the catalytic core - and a membrane F(1) domain - the membrane proton channel. These two domains are linked by a central stalk rotating inside the F(1) region and a stationary peripheral stalk. During catalysis, ATP synthesis in the catalytic domain of F(1) is coupled via a rotary mechanism of the central stalk subunits to proton translocation. In vivo, can only synthesize ATP although its ATP hydrolase activity can be activated artificially in vitro. Part of the complex F(0) domain. The chain is ATP synthase F(0) complex subunit 8 from Danio rerio (Zebrafish).